Here is a 795-residue protein sequence, read N- to C-terminus: Glutamine--tRNA ligase, cytoplasmic (795 aa).

The disordered stretch occupies residues 188–220; that stretch reads ADNEKPTKKKEKKEKPAKVEEKKAVVETTAEPS. Basic and acidic residues predominate over residues 200 to 212; that stretch reads KEKPAKVEEKKAV. The short motif at 277–287 is the 'HIGH' region element; it reads PEPNGYLHIGH. Residues 278-280 and 284-290 each bind ATP; these read EPN and HIGHAKA. 2 residues coordinate L-glutamine: Asp310 and Tyr450. ATP contacts are provided by residues Thr469, 498 to 499, and 506 to 508; these read RL and MSK. The short motif at 505–509 is the 'KMSKS' region element; the sequence is VMSKR.

It belongs to the class-I aminoacyl-tRNA synthetase family.

The protein resides in the cytoplasm. It localises to the cytosol. The catalysed reaction is tRNA(Gln) + L-glutamine + ATP = L-glutaminyl-tRNA(Gln) + AMP + diphosphate. This is Glutamine--tRNA ligase, cytoplasmic from Arabidopsis thaliana (Mouse-ear cress).